A 257-amino-acid chain; its full sequence is Phosphate import ATP-binding protein PstB (257 aa).

Residues 11-252 (LEVRDLNFFY…PQKKATEDYI (242 aa)) enclose the ABC transporter domain. ATP is bound at residue 43-50 (GPSGCGKS).

Belongs to the ABC transporter superfamily. Phosphate importer (TC 3.A.1.7) family. As to quaternary structure, the complex is composed of two ATP-binding proteins (PstB), two transmembrane proteins (PstC and PstA) and a solute-binding protein (PstS).

The protein localises to the cell inner membrane. The catalysed reaction is phosphate(out) + ATP + H2O = ADP + 2 phosphate(in) + H(+). Functionally, part of the ABC transporter complex PstSACB involved in phosphate import. Responsible for energy coupling to the transport system. The polypeptide is Phosphate import ATP-binding protein PstB (Chromobacterium violaceum (strain ATCC 12472 / DSM 30191 / JCM 1249 / CCUG 213 / NBRC 12614 / NCIMB 9131 / NCTC 9757 / MK)).